Here is a 520-residue protein sequence, read N- to C-terminus: Acetylcholine receptor subunit delta (520 aa).

The first 24 residues, 1–24, serve as a signal peptide directing secretion; the sequence is MAGPVLTLGLLAALVVCALPGSWG. Residues 25 to 248 are Extracellular-facing; the sequence is LNEEQRLIQH…VTFYLIIRRK (224 aa). 3 N-linked (GlcNAc...) asparagine glycosylation sites follow: asparagine 100, asparagine 167, and asparagine 193. Cysteine 154 and cysteine 168 are disulfide-bonded. Helical transmembrane passes span 249 to 273, 281 to 299, and 315 to 336; these read PLFYIINILVPCVLISFMINLVFYL, TSVAISVLLAQSVFLLLIS, and FLLFGMVLVTMVVVICVIVLNI. The Cytoplasmic segment spans residues 337-474; the sequence is HFRTPSTHVL…WNQVARTVDR (138 aa). Tyrosine 393 carries the post-translational modification Phosphotyrosine; by Tyr-kinases. A helical membrane pass occupies residues 475-493; that stretch reads LCLFVVTPVMVVGTAWIFL.

This sequence belongs to the ligand-gated ion channel (TC 1.A.9) family. Acetylcholine receptor (TC 1.A.9.1) subfamily. Delta/CHRND sub-subfamily. As to quaternary structure, pentamer of two alpha chains, and one each of the beta, delta, and gamma (in immature muscle) or epsilon (in mature muscle) chains. The muscle heteropentamer composed of alpha-1, beta-1, delta, epsilon subunits interacts with the alpha-conotoxin ImII.

It is found in the postsynaptic cell membrane. The protein localises to the cell membrane. The enzyme catalyses K(+)(in) = K(+)(out). It catalyses the reaction Na(+)(in) = Na(+)(out). In terms of biological role, after binding acetylcholine, the AChR responds by an extensive change in conformation that affects all subunits and leads to opening of an ion-conducting channel across the plasma membrane. This Mus musculus (Mouse) protein is Acetylcholine receptor subunit delta (Chrnd).